We begin with the raw amino-acid sequence, 363 residues long: Phosphoserine aminotransferase (363 aa).

R42 contacts L-glutamate. Pyridoxal 5'-phosphate contacts are provided by residues 76–77 (GR), W102, T156, D175, and Q198. N6-(pyridoxal phosphate)lysine is present on K199. A pyridoxal 5'-phosphate-binding site is contributed by 240–241 (NT).

Belongs to the class-V pyridoxal-phosphate-dependent aminotransferase family. SerC subfamily. Homodimer. It depends on pyridoxal 5'-phosphate as a cofactor.

Its subcellular location is the cytoplasm. It carries out the reaction O-phospho-L-serine + 2-oxoglutarate = 3-phosphooxypyruvate + L-glutamate. The catalysed reaction is 4-(phosphooxy)-L-threonine + 2-oxoglutarate = (R)-3-hydroxy-2-oxo-4-phosphooxybutanoate + L-glutamate. The protein operates within amino-acid biosynthesis; L-serine biosynthesis; L-serine from 3-phospho-D-glycerate: step 2/3. It functions in the pathway cofactor biosynthesis; pyridoxine 5'-phosphate biosynthesis; pyridoxine 5'-phosphate from D-erythrose 4-phosphate: step 3/5. In terms of biological role, catalyzes the reversible conversion of 3-phosphohydroxypyruvate to phosphoserine and of 3-hydroxy-2-oxo-4-phosphonooxybutanoate to phosphohydroxythreonine. The sequence is that of Phosphoserine aminotransferase from Shewanella sp. (strain MR-7).